A 131-amino-acid chain; its full sequence is MLIGVGTDIVQIPRIEKILHLYPELFAKKILTSKELKQFALLGKINHAAFLAKRFAAKEAVSKAFGVGIGQGINFKDITILNNDLGKPIVEVSSNYTNTLSPFNIHLSLADDYPVCVAFAVIESSYNVILG.

Residues Asp-8 and Glu-59 each contribute to the Mg(2+) site.

Belongs to the P-Pant transferase superfamily. AcpS family. The cofactor is Mg(2+).

The protein resides in the cytoplasm. It carries out the reaction apo-[ACP] + CoA = holo-[ACP] + adenosine 3',5'-bisphosphate + H(+). Its function is as follows. Transfers the 4'-phosphopantetheine moiety from coenzyme A to a Ser of acyl-carrier-protein. This chain is Holo-[acyl-carrier-protein] synthase, found in Rickettsia conorii (strain ATCC VR-613 / Malish 7).